The chain runs to 134 residues: MIICNDSYPSVLDKIADMLTKAEVELVFVSNEEMREINRDKRGMDKTTDVLSFPLTYVPHFPIGSIVINTDLASSKALELGHSTDDEIALLFTHGLLHILGFDHENDDGEMRRKEISIMEHMGLPKSLIVRNGC.

Zn(2+) contacts are provided by histidine 94, histidine 98, and histidine 104.

The protein belongs to the endoribonuclease YbeY family. Requires Zn(2+) as cofactor.

It localises to the cytoplasm. Single strand-specific metallo-endoribonuclease involved in late-stage 70S ribosome quality control and in maturation of the 3' terminus of the 16S rRNA. The protein is Endoribonuclease YbeY of Campylobacter fetus subsp. fetus (strain 82-40).